The sequence spans 741 residues: Fibrinogen alpha chain (741 aa).

Residues 1 to 18 form the signal peptide; sequence MIPVTILCVLLCLNLAWA. Gln-19 is modified (pyrrolidone carboxylic acid). Residues 67 to 506 adopt a coiled-coil conformation; it reads CCRMQGIIDD…STRRSYNGKD (440 aa). The tract at residues 270 to 307 is disordered; sequence VAEARGDSSPSHTGKLITSSHRRESPSLVDKTSSASSV. Residues 277–288 show a composition bias toward polar residues; sequence SSPSHTGKLITS. A disulfide bridge connects residues Cys-310 and Cys-341. Composition is skewed to low complexity over residues 381 to 398 and 435 to 449; these read STSSRHSIGSSTSSHVTG and SASHSKTVLTSSSSS. Residues 381–510 form a disordered region; that stretch reads STSSRHSIGS…SYNGKDCDDI (130 aa). A compositionally biased stretch (polar residues) spans 450–459; that stretch reads FNKGGSTFET. The 242-residue stretch at 498–739 folds into the Fibrinogen C-terminal domain; it reads TRRSYNGKDC…VVRMKIRPLE (242 aa). Residues Asp-666, Asp-668, Trp-670, and Glu-672 each contribute to the Ca(2+) site. A disulfide bridge links Cys-674 with Cys-687.

As to quaternary structure, heterohexamer; disulfide linked. Contains 2 sets of 3 non-identical chains (alpha, beta and gamma). The 2 heterotrimers are in head to head conformation with the N-termini in a small central domain. Post-translationally, conversion of fibrinogen to fibrin is triggered by thrombin, which cleaves fibrinopeptides A and B from alpha and beta chains, and thus exposes the N-terminal polymerization sites responsible for the formation of the soft clot. The soft clot is converted into the hard clot by factor XIIIA which catalyzes the epsilon-(gamma-glutamyl)lysine cross-linking between gamma chains (stronger) and between alpha chains (weaker) of different monomers. In terms of processing, forms F13A-mediated cross-links between a glutamine and the epsilon-amino group of a lysine residue, forming fibronectin-fibrinogen heteropolymers.

Its subcellular location is the secreted. In terms of biological role, cleaved by the protease thrombin to yield monomers which, together with fibrinogen beta (FGB) and fibrinogen gamma (FGG), polymerize to form an insoluble fibrin matrix. Fibrin has a major function in hemostasis as one of the primary components of blood clots. This is Fibrinogen alpha chain (FGA) from Gallus gallus (Chicken).